The chain runs to 594 residues: Probable methylenetetrahydrofolate reductase (NADH) (594 aa).

The active-site Proton donor/acceptor is the Glu21. NAD(+) is bound by residues 21-26 and 52-53; these read EYFPPK and TW. Residues 52–53, His81, 111–113, Tyr153, 157–160, Asp175, and Lys182 contribute to the FAD site; these read TW, RGD, and HPDA. Asp113 contacts substrate. Residues Gln193 and Tyr285 each contribute to the substrate site.

It belongs to the methylenetetrahydrofolate reductase family. Homodimer. The cofactor is FAD.

The enzyme catalyses (6S)-5-methyl-5,6,7,8-tetrahydrofolate + NAD(+) = (6R)-5,10-methylene-5,6,7,8-tetrahydrofolate + NADH + H(+). The protein operates within one-carbon metabolism; tetrahydrofolate interconversion. With respect to regulation, plant MTHFRs strongly prefer NADH over NADPH. Not inhibited by methionine or S-adenosylmethionine. In terms of biological role, the probable reversibility of the MTHFR reaction in plants suggests that they can metabolize the methyl group of 5,10-methylenetetrahydrofolate to serine, sugars and starch. The sequence is that of Probable methylenetetrahydrofolate reductase (NADH) from Oryza sativa subsp. japonica (Rice).